We begin with the raw amino-acid sequence, 91 residues long: Putative regulatory protein Cyan7425_4125 (91 aa).

It belongs to the RemA family.

This chain is Putative regulatory protein Cyan7425_4125, found in Cyanothece sp. (strain PCC 7425 / ATCC 29141).